The primary structure comprises 140 residues: ATP synthase epsilon chain (140 aa).

The protein belongs to the ATPase epsilon chain family. In terms of assembly, F-type ATPases have 2 components, CF(1) - the catalytic core - and CF(0) - the membrane proton channel. CF(1) has five subunits: alpha(3), beta(3), gamma(1), delta(1), epsilon(1). CF(0) has three main subunits: a, b and c.

The protein localises to the cell inner membrane. Its function is as follows. Produces ATP from ADP in the presence of a proton gradient across the membrane. This chain is ATP synthase epsilon chain, found in Xylella fastidiosa (strain Temecula1 / ATCC 700964).